We begin with the raw amino-acid sequence, 312 residues long: HPr kinase/phosphorylase (312 aa).

Active-site residues include histidine 139 and lysine 160. 154-161 serves as a coordination point for ATP; sequence GDSGIGKS. Serine 161 serves as a coordination point for Mg(2+). The active-site Proton acceptor; for phosphorylation activity. Proton donor; for dephosphorylation activity is aspartate 178. The segment at 202-211 is important for the catalytic mechanism of both phosphorylation and dephosphorylation; it reads IEIRGVGIID. Position 203 (glutamate 203) interacts with Mg(2+). Arginine 244 is a catalytic residue. Residues 265–270 are important for the catalytic mechanism of dephosphorylation; sequence PVKTGR.

The protein belongs to the HPrK/P family. Homohexamer. Requires Mg(2+) as cofactor.

It catalyses the reaction [HPr protein]-L-serine + ATP = [HPr protein]-O-phospho-L-serine + ADP + H(+). The catalysed reaction is [HPr protein]-O-phospho-L-serine + phosphate + H(+) = [HPr protein]-L-serine + diphosphate. Its function is as follows. Catalyzes the ATP- as well as the pyrophosphate-dependent phosphorylation of a specific serine residue in HPr, a phosphocarrier protein of the phosphoenolpyruvate-dependent sugar phosphotransferase system (PTS). HprK/P also catalyzes the pyrophosphate-producing, inorganic phosphate-dependent dephosphorylation (phosphorolysis) of seryl-phosphorylated HPr (P-Ser-HPr). The two antagonistic activities of HprK/P are regulated by several intracellular metabolites, which change their concentration in response to the absence or presence of rapidly metabolisable carbon sources (glucose, fructose, etc.) in the growth medium. Therefore, by controlling the phosphorylation state of HPr, HPrK/P is a sensor enzyme that plays a major role in the regulation of carbon metabolism and sugar transport: it mediates carbon catabolite repression (CCR), and regulates PTS-catalyzed carbohydrate uptake and inducer exclusion. The sequence is that of HPr kinase/phosphorylase from Streptococcus pneumoniae serotype 4 (strain ATCC BAA-334 / TIGR4).